A 130-amino-acid chain; its full sequence is Small ribosomal subunit protein uS11c (130 aa).

It belongs to the universal ribosomal protein uS11 family. As to quaternary structure, part of the 30S ribosomal subunit.

It is found in the plastid. The protein localises to the chloroplast. This is Small ribosomal subunit protein uS11c from Pyropia yezoensis (Susabi-nori).